A 435-amino-acid polypeptide reads, in one-letter code: F-box/FBD/LRR-repeat protein At5g44980 (435 aa).

An F-box domain is found at 3–49 (RDYISELPDSLLTQILLELRTKDSVKTSVLSKRWRNLWLNVPGLELF). LRR repeat units follow at residues 88-114 (CKGYRDRLMELIGTLVDHGLQHLYVFM), 138-162 (LHNVELKNSDFVVSLPCLKILKLEN), 165-190 (HGEDGPLVVEKLISGCSVLEDLELIR), 191-217 (PFDIRTHKVLLLLRVSSQTLKSFTLHF), 250-275 (VKNLSSLFSIDIGTKFNPLRHEDLRM), and 324-349 (MWSSSTHLLEAFLESCPNLKNLILEY). Positions 355-405 (REQVDFTNVPQCLISTLEYVEIKEPNEKSTIKLVNYFLENSAVLKKLTLRF) constitute an FBD domain.

The polypeptide is F-box/FBD/LRR-repeat protein At5g44980 (Arabidopsis thaliana (Mouse-ear cress)).